Reading from the N-terminus, the 65-residue chain is Movement protein TGBp3 (65 aa).

The Lumenal portion of the chain corresponds to 1 to 3 (MQA). Residues 4–24 (SGLILVALFSAVVSYLALLHL) traverse the membrane as a helical segment. Residues 25–65 (SSSSSSCVVVVTGESFRISGCDFTEEFIGFAKTLRVANSQP) lie on the Cytoplasmic side of the membrane.

The protein belongs to the Tymovirales TGBp3 protein family.

The protein resides in the host endoplasmic reticulum membrane. Functionally, plays a role in viral cell-to-cell propagation, by facilitating genome transport to neighboring plant cells through plasmosdesmata. May induce the formation of granular vesicles derived from the Endoplasmic reticulum, which align on actin filaments. The sequence is that of Movement protein TGBp3 from Carnation latent virus (CLV).